Consider the following 117-residue polypeptide: Large ribosomal subunit protein bL20c (117 aa).

Belongs to the bacterial ribosomal protein bL20 family.

Its subcellular location is the plastid. Binds directly to 23S ribosomal RNA and is necessary for the in vitro assembly process of the 50S ribosomal subunit. It is not involved in the protein synthesizing functions of that subunit. The chain is Large ribosomal subunit protein bL20c (rpl20) from Euglena longa (Euglenophycean alga).